The following is a 279-amino-acid chain: Phosphatidylglycerol--prolipoprotein diacylglyceryl transferase (279 aa).

3 helical membrane passes run 18 to 38 (LSVR…YFVA), 55 to 75 (IIFY…VIFQ), and 89 to 109 (IWHG…AGVI). Position 137 (Arg-137) interacts with a 1,2-diacyl-sn-glycero-3-phospho-(1'-sn-glycerol). The next 2 membrane-spanning stretches (helical) occupy residues 203–223 (LGET…FIEG) and 235–255 (IRVA…LIVY).

The protein belongs to the Lgt family.

Its subcellular location is the cell membrane. The catalysed reaction is L-cysteinyl-[prolipoprotein] + a 1,2-diacyl-sn-glycero-3-phospho-(1'-sn-glycerol) = an S-1,2-diacyl-sn-glyceryl-L-cysteinyl-[prolipoprotein] + sn-glycerol 1-phosphate + H(+). Its pathway is protein modification; lipoprotein biosynthesis (diacylglyceryl transfer). Catalyzes the transfer of the diacylglyceryl group from phosphatidylglycerol to the sulfhydryl group of the N-terminal cysteine of a prolipoprotein, the first step in the formation of mature lipoproteins. This is Phosphatidylglycerol--prolipoprotein diacylglyceryl transferase from Staphylococcus aureus (strain Mu3 / ATCC 700698).